We begin with the raw amino-acid sequence, 340 residues long: 4-amino-5-hydroxymethyl-2-methylpyrimidine phosphate synthase THI11 (340 aa).

Residue lysine 62 is modified to N6-(pyridoxal phosphate)lysine. Histidine 66 is a catalytic residue. 115–118 (GEFG) lines the pyridoxal 5'-phosphate pocket. The CCCFC; essential for catalytic activity, may be the site of iron coordination signature appears at 195–199 (CCCFC).

Belongs to the NMT1/THI5 family. In terms of assembly, homodimer. It depends on Fe cation as a cofactor.

It carries out the reaction N(6)-(pyridoxal phosphate)-L-lysyl-[4-amino-5-hydroxymethyl-2-methylpyrimidine phosphate synthase] + L-histidyl-[4-amino-5-hydroxymethyl-2-methylpyrimidine phosphate synthase] + 2 Fe(3+) + 4 H2O = L-lysyl-[4-amino-5-hydroxymethyl-2-methylpyrimidine phosphate synthase] + (2S)-2-amino-5-hydroxy-4-oxopentanoyl-[4-amino-5-hydroxymethyl-2-methylpyrimidine phosphate synthase] + 4-amino-2-methyl-5-(phosphooxymethyl)pyrimidine + 3-oxopropanoate + 2 Fe(2+) + 2 H(+). It functions in the pathway cofactor biosynthesis; thiamine diphosphate biosynthesis. Responsible for the formation of the pyrimidine heterocycle in the thiamine biosynthesis pathway. Catalyzes the formation of hydroxymethylpyrimidine phosphate (HMP-P) from histidine and pyridoxal phosphate (PLP). The protein uses PLP and the active site histidine to form HMP-P, generating an inactive enzyme. The enzyme can only undergo a single turnover, which suggests it is a suicide enzyme. This chain is 4-amino-5-hydroxymethyl-2-methylpyrimidine phosphate synthase THI11, found in Saccharomyces cerevisiae (strain ATCC 204508 / S288c) (Baker's yeast).